The sequence spans 128 residues: Calcitonin gene-related peptide 1 (128 aa).

Residues 1-25 form the signal peptide; sequence MGLWKSSPFLAFSILVLCQAGGLQA. The propeptide occupies 26–80; it reads APFRSALEGLPDPTALSEKEGRLLLAALVKAYVQRKNELEQEQEQETEGSSITAQ. The disordered stretch occupies residues 63–83; sequence ELEQEQEQETEGSSITAQKRS. Residues 74–83 are compositionally biased toward polar residues; sequence GSSITAQKRS. Cysteine 84 and cysteine 89 are disulfide-bonded. Phenylalanine 119 carries the phenylalanine amide modification. Positions 125–128 are excised as a propeptide; it reads DLRA.

It belongs to the calcitonin family.

It is found in the secreted. In terms of biological role, CGRP1/CALCA is a peptide hormone that induces vasodilation mediated by the CALCRL-RAMP1 receptor complex. Dilates a variety of vessels including the coronary, cerebral and systemic vasculature. Its abundance in the CNS also points toward a neurotransmitter or neuromodulator role. It also elevates platelet cAMP. CGRP1 can also bind and activate CALCR-RAMP1 (AMYR1) receptor complex. The chain is Calcitonin gene-related peptide 1 (CALCA) from Canis lupus familiaris (Dog).